A 150-amino-acid polypeptide reads, in one-letter code: Transcription antitermination protein NusB (150 aa).

The protein belongs to the NusB family.

Functionally, involved in transcription antitermination. Required for transcription of ribosomal RNA (rRNA) genes. Binds specifically to the boxA antiterminator sequence of the ribosomal RNA (rrn) operons. The protein is Transcription antitermination protein NusB of Chloroflexus aggregans (strain MD-66 / DSM 9485).